The primary structure comprises 1155 residues: uncharacterized protein (1155 aa).

Positions 1 to 19 (MNKNIFITLLISSLLLLSG) are cleaved as a signal peptide. Cysteine 20 is lipidated: N-palmitoyl cysteine. Cysteine 20 carries the S-diacylglycerol cysteine lipid modification. The next 4 membrane-spanning stretches (helical) occupy residues 291–311 (VSAILTLYIMFTGFSFLIGNI), 395–415 (LGFIYIILYLIALYFIFFLIF), 424–444 (ALITIGMIIIMGPIFICFMLF), and 459–479 (ISYALQPIILFAGIAFISMII).

It belongs to the TrbL/VirB6 family.

The protein resides in the cell membrane. This is an uncharacterized protein from Rickettsia felis (strain ATCC VR-1525 / URRWXCal2) (Rickettsia azadi).